Reading from the N-terminus, the 131-residue chain is Histone H2A.2 (131 aa).

The segment at 1–22 (MSGGKGKAGSSEKASTSRSAKA) is disordered. An N-acetylserine modification is found at Ser-2. N6-acetyllysine occurs at positions 5 and 7. Gln-105 is subject to N5-methylglutamine. At Ser-128 the chain carries Phosphoserine. The [ST]-Q motif signature appears at 128–129 (SQ).

Belongs to the histone H2A family. The nucleosome is a histone octamer containing two molecules each of H2A, H2B, H3 and H4 assembled in one H3-H4 heterotetramer and two H2A-H2B heterodimers. The octamer wraps approximately 147 bp of DNA. In terms of processing, phosphorylated to form H2AS128ph (gamma-H2A) in response to DNA double-strand breaks (DSBs) generated by exogenous genotoxic agents and by stalled replication forks. Phosphorylation is dependent on the DNA damage checkpoint kinases MEC1/ATR and TEL1/ATM, spreads on either side of a detected DSB site and may mark the surrounding chromatin for recruitment of proteins required for DNA damage signaling and repair. Gamma-H2A is removed from the DNA prior to the strand invasion-primer extension step of the repair process and subsequently dephosphorylated. Dephosphorylation is necessary for efficient recovery from the DNA damage checkpoint. Post-translationally, acetylated by ESA1 to form H2AK4ac and H2AK7ac.

The protein resides in the nucleus. The protein localises to the chromosome. Its function is as follows. Core component of nucleosome which plays a central role in DNA double strand break (DSB) repair. Nucleosomes wrap and compact DNA into chromatin, limiting DNA accessibility to the cellular machineries which require DNA as a template. Histones thereby play a central role in transcription regulation, DNA repair, DNA replication and chromosomal stability. DNA accessibility is regulated via a complex set of post-translational modifications of histones, also called histone code, and nucleosome remodeling. This chain is Histone H2A.2 (HTA2), found in Debaryomyces hansenii (strain ATCC 36239 / CBS 767 / BCRC 21394 / JCM 1990 / NBRC 0083 / IGC 2968) (Yeast).